The following is a 189-amino-acid chain: Ribosome maturation factor RimP (189 aa).

This sequence belongs to the RimP family.

The protein resides in the cytoplasm. In terms of biological role, required for maturation of 30S ribosomal subunits. This Mycobacteroides abscessus (strain ATCC 19977 / DSM 44196 / CCUG 20993 / CIP 104536 / JCM 13569 / NCTC 13031 / TMC 1543 / L948) (Mycobacterium abscessus) protein is Ribosome maturation factor RimP.